A 169-amino-acid chain; its full sequence is MDPLKICENYLTFRAIIRGSTLSPGFFRRWCFPALADVVGNIVEQEEGRFWQILPENHAFWGLLRRGFTVASFTEIITAAQLENRGRQLAFLAFISFLLRNWPSDSVVPEADRLDLVCAPAWSRMQIWSQTARLINDLQDSVLEEQGSAEEEECEEALLAGDSDDPLFG.

The protein belongs to the adenoviridae E1B 19 kDa protein family.

The protein is E1B protein, small T-antigen of Canis lupus familiaris (Dog).